The sequence spans 428 residues: Glycine reductase complex component B subunits alpha and beta (428 aa).

Residue C242 is the Schiff-base intermediate with substrate; via pyruvic acid of the active site. A Pyruvic acid (Cys) modification is found at C242.

Heterohexamer of two alpha, two beta and two gamma subunits. Component of the glycine reductase complex, together with components A and C. PB is substrate specific. Post-translationally, the peptide chain is cleaved into beta and alpha chains, and the alpha chain N-terminal cysteine is deaminated and oxidized to form a reactive pyruvoyl group.

It carries out the reaction acetyl phosphate + [thioredoxin]-disulfide + NH4(+) + H2O = [thioredoxin]-dithiol + glycine + phosphate + H(+). In terms of biological role, in the first step of glycine reductase, the substrate is bound to component PB via a Schiff base intermediate. Then the PB-activated substrate is nucleophilically attacked by the selenol anion of component PA to transform it to a carboxymethylated selenoether and the respective amine. By action of component PC, acetyl phosphate is formed, leaving component PA in its oxidized state. Finally component PA becomes reduced by the thioredoxin system to start a new catalytic cycle of reductive deamination. The chain is Glycine reductase complex component B subunits alpha and beta (grdE) from Peptoclostridium acidaminophilum (Eubacterium acidaminophilum).